Here is a 321-residue protein sequence, read N- to C-terminus: MATH domain and coiled-coil domain-containing protein At3g58260 (321 aa).

One can recognise an MATH domain in the interval 6–135 (NNTFTWVIKN…NDEVMVAVAV (130 aa)). Residues 232 to 283 (KLDWLEKKLDELFEKKKEEADKIRMQNIEEELKDLRQKCSSLEALLKKEKTG) are a coiled coil.

In Arabidopsis thaliana (Mouse-ear cress), this protein is MATH domain and coiled-coil domain-containing protein At3g58260.